A 222-amino-acid chain; its full sequence is ATP-dependent dethiobiotin synthetase BioD 2 (222 aa).

T17 is a binding site for Mg(2+). Residue K38 is part of the active site. A substrate-binding site is contributed by T42. Mg(2+) is bound by residues D55 and E112. Residues D55, 112-115 (EGCG), 172-173 (NR), 201-203 (PYL), and E208 contribute to the ATP site.

Belongs to the dethiobiotin synthetase family. Homodimer. The cofactor is Mg(2+).

It is found in the cytoplasm. The enzyme catalyses (7R,8S)-7,8-diammoniononanoate + CO2 + ATP = (4R,5S)-dethiobiotin + ADP + phosphate + 3 H(+). The protein operates within cofactor biosynthesis; biotin biosynthesis; biotin from 7,8-diaminononanoate: step 1/2. In terms of biological role, catalyzes a mechanistically unusual reaction, the ATP-dependent insertion of CO2 between the N7 and N8 nitrogen atoms of 7,8-diaminopelargonic acid (DAPA, also called 7,8-diammoniononanoate) to form a ureido ring. The chain is ATP-dependent dethiobiotin synthetase BioD 2 from Yersinia pestis.